Reading from the N-terminus, the 526-residue chain is Delayed-rectifier potassium channel regulatory subunit KCNS1 (526 aa).

Topologically, residues 1 to 217 (MLMLLVRGTH…LTMENPGYSL (217 aa)) are cytoplasmic. Residues 218 to 239 (PSKLFSCVSISVVLASIAAMCI) form a helical membrane-spanning segment. Residues 240 to 270 (HSLPEYQAREAAAAVAAVAAGRSPEGVRDDP) are Extracellular-facing. A helical transmembrane segment spans residues 271–293 (VLRRLEYFCIAWFSFEVSSRLLL). Topologically, residues 294-304 (APSTRNFFCHP) are cytoplasmic. Residues 305 to 322 (LNLIDIVSVLPFYLTLLA) traverse the membrane as a helical segment. Over 323–337 (GVALGDQGGKEFGHL) the chain is Extracellular. Residues 338 to 358 (GKVVQVFRLMRIFRVLKLARH) traverse the membrane as a helical; Voltage-sensor segment. The Cytoplasmic portion of the chain corresponds to 359–373 (STGLRSLGATLKHSY). Residues 374 to 395 (REVGILLLYLAVGVSVFSGVAY) traverse the membrane as a helical segment. Residues 396–408 (TAEKEEDVGFNTI) lie on the Extracellular side of the membrane. Positions 409 to 420 (PACWWWGTVSMT) form an intramembrane region, helical. The Selectivity filter motif lies at 421 to 426 (TVGYGD). The stretch at 421 to 428 (TVGYGDVV) is an intramembrane region. Over 429-435 (PVTVAGK) the chain is Extracellular. Residues 436-464 (LAASGCILGGILVVALPITIIFNKFSHFY) traverse the membrane as a helical segment. Residues 465–526 (RRQKALEAAV…PSEPPHPQMY (62 aa)) are Cytoplasmic-facing. The tract at residues 491 to 526 (GVSEASLETSRETSQEGRSADLESQAPSEPPHPQMY) is disordered. Positions 499-511 (TSRETSQEGRSAD) are enriched in basic and acidic residues.

This sequence belongs to the potassium channel family. S (TC 1.A.1.2) subfamily. Kv9.1/KCNS1 sub-subfamily. In terms of assembly, heterotetramer with KCNB1. Heterotetramer with KCNB2. Does not form homomultimers.

It localises to the cell membrane. Potassium channel regulatory subunit that modulate the delayed rectifier voltage-gated potassium channel activity of KCNB1 and KCNB2 by altering their kinetics, expression levels, and shifting the half-inactivation potential to more polarized values. While it does not form functional channels on its own, it can form functional heterotetrameric channels with KCNB1 and KCNB2. Each regulatory subunit has unique regulatory properties that can lead to extensive inhibition, significant changes in kinetics, and/or substantial shifts in the voltage dependencies of the inactivation process. In Pan troglodytes (Chimpanzee), this protein is Delayed-rectifier potassium channel regulatory subunit KCNS1.